Consider the following 880-residue polypeptide: Interference hedgehog (880 aa).

The N-terminal stretch at methionine 1–alanine 20 is a signal peptide. At isoleucine 21 to proline 703 the chain is on the extracellular side. Ig-like C2-type domains are found at residues proline 37–leucine 142, proline 154–serine 235, proline 251–valine 339, and proline 345–threonine 432. Intrachain disulfides connect cysteine 60–cysteine 126, cysteine 172–cysteine 219, cysteine 275–cysteine 323, and cysteine 366–cysteine 414. 3 N-linked (GlcNAc...) asparagine glycosylation sites follow: asparagine 79, asparagine 102, and asparagine 208. The tract at residues proline 435–valine 468 is disordered. Residues asparagine 447 and asparagine 467 are each glycosylated (N-linked (GlcNAc...) asparagine). Fibronectin type-III domains lie at proline 462–glycine 570 and valine 578–proline 673. Residues arginine 498, lysine 504, lysine 506, and arginine 544 each coordinate heparin. The N-linked (GlcNAc...) asparagine glycan is linked to asparagine 560. A disordered region spans residues leucine 665–phenylalanine 699. The span at glycine 668 to phenylalanine 699 shows a compositional bias: polar residues. A glycan (N-linked (GlcNAc...) asparagine) is linked at asparagine 696. A helical membrane pass occupies residues isoleucine 704–leucine 724. The Cytoplasmic segment spans residues cysteine 725–valine 880. A disordered region spans residues tyrosine 797–valine 880. Composition is skewed to low complexity over residues arginine 827–asparagine 839 and serine 864–valine 880.

It belongs to the immunoglobulin superfamily. IHOG family. As to quaternary structure, homodimer. Heterotetramer; 2 iHog chains bind 2 hh chains when facilitated by heparin, heparin is required to promote high-affinity interactions between hh and iHog.

The protein resides in the membrane. Mediates response to the active Hedgehog (Hh) protein signal in embryos, functioning upstream or at the level of patched (ptc). The protein is Interference hedgehog of Drosophila ananassae (Fruit fly).